We begin with the raw amino-acid sequence, 364 residues long: Phosphoserine aminotransferase (364 aa).

Residue arginine 40 participates in L-glutamate binding. Pyridoxal 5'-phosphate-binding positions include 74–75, tryptophan 100, threonine 149, aspartate 170, and glutamine 193; that span reads GT. Lysine 194 is subject to N6-(pyridoxal phosphate)lysine. 235–236 serves as a coordination point for pyridoxal 5'-phosphate; the sequence is NT.

It belongs to the class-V pyridoxal-phosphate-dependent aminotransferase family. SerC subfamily. As to quaternary structure, homodimer. The cofactor is pyridoxal 5'-phosphate. In terms of tissue distribution, expressed in ovary and head.

The catalysed reaction is O-phospho-L-serine + 2-oxoglutarate = 3-phosphooxypyruvate + L-glutamate. It carries out the reaction 4-(phosphooxy)-L-threonine + 2-oxoglutarate = (R)-3-hydroxy-2-oxo-4-phosphooxybutanoate + L-glutamate. Its pathway is amino-acid biosynthesis; L-serine biosynthesis; L-serine from 3-phospho-D-glycerate: step 2/3. It participates in cofactor biosynthesis; pyridoxine 5'-phosphate biosynthesis; pyridoxine 5'-phosphate from D-erythrose 4-phosphate: step 3/5. Its function is as follows. Catalyzes the reversible conversion of 3-phosphohydroxypyruvate to phosphoserine and of 3-hydroxy-2-oxo-4-phosphonooxybutanoate to phosphohydroxythreonine. The protein is Phosphoserine aminotransferase of Drosophila melanogaster (Fruit fly).